A 399-amino-acid chain; its full sequence is Argininosuccinate synthase (399 aa).

ATP is bound at residue 9 to 17 (AYSGGLDTS). Residue Y85 coordinates L-citrulline. Position 115 (G115) interacts with ATP. The L-aspartate site is built by T117, N121, and D122. L-citrulline is bound at residue N121. The L-citrulline site is built by R125, S173, E258, and Y270.

This sequence belongs to the argininosuccinate synthase family. Type 1 subfamily. In terms of assembly, homotetramer.

The protein resides in the cytoplasm. The catalysed reaction is L-citrulline + L-aspartate + ATP = 2-(N(omega)-L-arginino)succinate + AMP + diphosphate + H(+). Its pathway is amino-acid biosynthesis; L-arginine biosynthesis; L-arginine from L-ornithine and carbamoyl phosphate: step 2/3. The protein is Argininosuccinate synthase of Streptococcus gordonii (strain Challis / ATCC 35105 / BCRC 15272 / CH1 / DL1 / V288).